We begin with the raw amino-acid sequence, 372 residues long: Delta-type opioid receptor (372 aa).

Residues 1–47 (MELVPSARAELQSSPLVNLSDAFPSAFPSAGANASGSPGARSASSLA) are Extracellular-facing. Residues Asn18 and Asn33 are each glycosylated (N-linked (GlcNAc...) asparagine). The helical transmembrane segment at 48–75 (LAIAITALYSAVCAVGLLGNVLVMFGIV) threads the bilayer. At 76-85 (RYTKLKTATN) the chain is on the cytoplasmic side. Residues 86–110 (IYIFNLALADALATSTLPFQSAKYL) traverse the membrane as a helical segment. Residues 111-122 (METWPFGELLCK) are Extracellular-facing. Cys121 and Cys198 are joined by a disulfide. Residues 123-144 (AVLSIDYYNMFTSIFTLTMMSV) form a helical membrane-spanning segment. Over 145–163 (DRYIAVCHPVKALDFRTPA) the chain is Cytoplasmic. Residues 164–186 (KAKLINICIWVLASGVGVPIMVM) traverse the membrane as a helical segment. The Extracellular segment spans residues 187–206 (AVTQPRDGAVVCMLQFPSPS). Residues 207–238 (WYWDTVTKICVFLFAFVVPILIITVCYGLMLL) form a helical membrane-spanning segment. Residues 239–261 (RLRSVRLLSGSKEKDRSLRRITR) are Cytoplasmic-facing. Residues 262 to 284 (MVLVVVGAFVVCWAPIHIFVIVW) traverse the membrane as a helical segment. At 285–299 (TLVDINRRDPLVVAA) the chain is on the extracellular side. Residues 300–321 (LHLCIALGYANSSLNPVLYAFL) form a helical membrane-spanning segment. Residues 322–372 (DENFKRCFRQLCRTPCGRQEPGSLRRPRQATTRERVTACTPSDGPGGGAAA) are Cytoplasmic-facing. A lipid anchor (S-palmitoyl cysteine) is attached at Cys333. A disordered region spans residues 340-372 (QEPGSLRRPRQATTRERVTACTPSDGPGGGAAA).

This sequence belongs to the G-protein coupled receptor 1 family. May form homooligomers. Forms a heterodimer with OPRM1. Interacts with GPRASP1. Interacts with RTP4; the interaction promotes cell surface localization of the OPRD1-OPRM1 heterodimer. Ubiquitinated. A basal ubiquitination seems not to be related to degradation. Ubiquitination is increased upon formation of OPRM1:OPRD1 oligomers leading to proteasomal degradation; the ubiquitination is diminished by RTP4. In terms of tissue distribution, brain, with high concentrations in the basal ganglia and limbic regions.

Its subcellular location is the cell membrane. G-protein coupled receptor that functions as a receptor for endogenous enkephalins and for a subset of other opioids. Ligand binding causes a conformation change that triggers signaling via guanine nucleotide-binding proteins (G proteins) and modulates the activity of down-stream effectors, such as adenylate cyclase. Signaling leads to the inhibition of adenylate cyclase activity. Inhibits neurotransmitter release by reducing calcium ion currents and increasing potassium ion conductance. Plays a role in the perception of pain and in opiate-mediated analgesia. Plays a role in developing analgesic tolerance to morphine. The sequence is that of Delta-type opioid receptor (Oprd1) from Mus musculus (Mouse).